A 261-amino-acid polypeptide reads, in one-letter code: Short-chain dehydrogenase/reductase AFUA_1G00990 (261 aa).

NADP(+)-binding residues include Leu-19, Asp-67, Asn-94, Tyr-169, Lys-173, and Thr-213. Catalysis depends on Tyr-169, which acts as the Proton donor. Lys-173 serves as the catalytic Lowers pKa of active site Tyr.

Belongs to the short-chain dehydrogenases/reductases (SDR) family.

Its function is as follows. Short-chain dehydrogenase/reductase; part of the gene cluster that mediates the biosynthesis of fumigermin that inhibits germination of spores of the inducing S.rapamycinicus, and thus helps the fungus to defend resources in the shared habitat against a bacterial competitor. The partially reducing polyketide synthase fngA alone is sufficient for the production of fumigermin. FgnA catalyzes the condensation of 3 malonyl-CoA units to an acetyl-CoA starter, and 3 methylations to yield fumigermin. It is remarkable that the five cluster genes including fgnA are conserved in distantly related fungi, supporting the assumption of a fumigermin cluster; it is thus possible that originally all five genes were functional, but that the genes encoding tailoring enzymes became inactive from mutations, similar to the case of the fgnA gene in strains A1163 and Af293. This Aspergillus fumigatus (strain ATCC MYA-4609 / CBS 101355 / FGSC A1100 / Af293) (Neosartorya fumigata) protein is Short-chain dehydrogenase/reductase AFUA_1G00990.